We begin with the raw amino-acid sequence, 329 residues long: Glycerol-3-phosphate dehydrogenase [NAD(P)+] (329 aa).

W11, R30, and K103 together coordinate NADPH. 3 residues coordinate sn-glycerol 3-phosphate: K103, G132, and S134. An NADPH-binding site is contributed by A136. Positions 187, 240, 250, 251, and 252 each coordinate sn-glycerol 3-phosphate. K187 (proton acceptor) is an active-site residue. R251 serves as a coordination point for NADPH. Residues V275 and E277 each contribute to the NADPH site.

This sequence belongs to the NAD-dependent glycerol-3-phosphate dehydrogenase family.

Its subcellular location is the cytoplasm. It catalyses the reaction sn-glycerol 3-phosphate + NAD(+) = dihydroxyacetone phosphate + NADH + H(+). The catalysed reaction is sn-glycerol 3-phosphate + NADP(+) = dihydroxyacetone phosphate + NADPH + H(+). Its pathway is membrane lipid metabolism; glycerophospholipid metabolism. Its function is as follows. Catalyzes the reduction of the glycolytic intermediate dihydroxyacetone phosphate (DHAP) to sn-glycerol 3-phosphate (G3P), the key precursor for phospholipid synthesis. The chain is Glycerol-3-phosphate dehydrogenase [NAD(P)+] from Nitrosomonas eutropha (strain DSM 101675 / C91 / Nm57).